The chain runs to 232 residues: Adenosylcobinamide-GDP ribazoletransferase (232 aa).

6 consecutive transmembrane segments (helical) span residues 32–52 (PIYFPLVGYIPGILFFFGGSF), 54–74 (NFLLKILFLILGYYFFDLFHF), 102–122 (VGPFAVFFGTLYVVVFWTLYL), 126–146 (PITFIYSSVFGRYSMNLLMFF), 172–192 (FFLLPLLFSMKYFFISYVVTV), and 212–232 (DVLGGACLMTNGLLLVVLGVV).

Belongs to the CobS family. The cofactor is Mg(2+).

The protein resides in the cell inner membrane. The catalysed reaction is alpha-ribazole + adenosylcob(III)inamide-GDP = adenosylcob(III)alamin + GMP + H(+). It catalyses the reaction alpha-ribazole 5'-phosphate + adenosylcob(III)inamide-GDP = adenosylcob(III)alamin 5'-phosphate + GMP + H(+). It functions in the pathway cofactor biosynthesis; adenosylcobalamin biosynthesis; adenosylcobalamin from cob(II)yrinate a,c-diamide: step 7/7. In terms of biological role, joins adenosylcobinamide-GDP and alpha-ribazole to generate adenosylcobalamin (Ado-cobalamin). Also synthesizes adenosylcobalamin 5'-phosphate from adenosylcobinamide-GDP and alpha-ribazole 5'-phosphate. This chain is Adenosylcobinamide-GDP ribazoletransferase, found in Thermosipho melanesiensis (strain DSM 12029 / CIP 104789 / BI429).